Here is a 359-residue protein sequence, read N- to C-terminus: Insulin gene enhancer protein isl-2a (359 aa).

LIM zinc-binding domains are found at residues Cys27–Asp80 and Cys30–His143. The disordered stretch occupies residues Glu171–Lys190. Residues Thr191–Ser250 constitute a DNA-binding region (homeobox). Low complexity predominate over residues Glu326–Ser336. The tract at residues Glu326–Thr359 is disordered. Residues Asp337–Thr359 show a composition bias toward polar residues.

The protein localises to the nucleus. Functionally, binds to one of the cis-acting domain of the insulin gene enhancer. May be involved in subtype specialization of primary motoneurons. The chain is Insulin gene enhancer protein isl-2a (isl2a) from Danio rerio (Zebrafish).